Consider the following 588-residue polypeptide: MFS siderochrome iron transporter 1 (588 aa).

Transmembrane regions (helical) follow at residues 60 to 80 (QVWS…ITFV), 104 to 124 (LTAS…LPLA), 133 to 153 (PQGF…MAAC), 161 to 181 (AAQV…SIFI), 191 to 211 (ALMF…GGPL), 225 to 245 (YGAF…VFAW), 278 to 298 (IIGI…FSLY), 307 to 327 (SSLV…FALY), 348 to 368 (LGAC…DSYF), 385 to 405 (YIVN…GILV), 413 to 433 (WLAL…MITF), 440 to 460 (IGYI…CVIT), and 473 to 495 (YVAV…GQTV). N-linked (GlcNAc...) asparagine glycosylation occurs at N519. The helical transmembrane segment at 552–572 (KYMLIGGTAILAVGLGATMMW) threads the bilayer.

This sequence belongs to the major facilitator superfamily.

The protein resides in the membrane. Major facilitator transporter involved in siderophore transport. The protein is MFS siderochrome iron transporter 1 of Ajellomyces capsulatus (Darling's disease fungus).